A 212-amino-acid polypeptide reads, in one-letter code: Thymidylate kinase (212 aa).

Residue 11–18 coordinates ATP; the sequence is GIEGSGKT.

The protein belongs to the thymidylate kinase family.

It carries out the reaction dTMP + ATP = dTDP + ADP. Functionally, phosphorylation of dTMP to form dTDP in both de novo and salvage pathways of dTTP synthesis. The sequence is that of Thymidylate kinase from Buchnera aphidicola subsp. Baizongia pistaciae (strain Bp).